The following is a 104-amino-acid chain: MKSLLLLAFFLSFFFGSLLARHLPTSSHPSHHHVGMTGALKRQRRRPDTVQVAGSRLPDCSHACGSCSPCRLVMVSFVCASVEEAETCPMAYKCMCNNKSYPVP.

The N-terminal stretch at 1–20 (MKSLLLLAFFLSFFFGSLLA) is a signal peptide. Disulfide bonds link Cys60–Cys94, Cys64–Cys70, Cys67–Cys96, and Cys79–Cys88. Asn98 carries N-linked (GlcNAc...) asparagine glycosylation.

Belongs to the plant cysteine rich small secretory peptide family. Epidermal patterning factor subfamily. In terms of assembly, interacts with ERECTA and ERL1, but not with TMM. In terms of tissue distribution, expressed in shoots, but not in roots. Mostly localized in developing leaves, specifically in meristemoids, guard mother cells (GMCs), and young guard cells.

The protein resides in the secreted. In terms of biological role, controls stomatal patterning. Regulates asymmetric cell division during guard cell differentiation. Mediates stomatal development inhibition. Not cleaved by the protease CRSP (AC Q9LNU1). MEPF1: mobile signal controlling stomatal development in a non-cell-autonomous manner. Uses ERL1 as major receptor. May act by competing with somatogen (AC Q9SV72) for the same receptor, TMM (AC Q9SSD1). The protein is Protein EPIDERMAL PATTERNING FACTOR 1 of Arabidopsis thaliana (Mouse-ear cress).